The sequence spans 732 residues: Prolyl 3-hydroxylase 3 (732 aa).

The first 19 residues, 1 to 19 (MLRLLRLLLLLLLPPPGSP), serve as a signal peptide directing secretion. The segment covering 15-25 (PPGSPEPPEPP) has biased composition (pro residues). Positions 15 to 35 (PPGSPEPPEPPGLAQLSPGSP) are disordered. TPR repeat units follow at residues 39 to 72 (PDLL…RAAL), 152 to 185 (REPY…NPTH), 214 to 247 (YWAA…SLAH), and 312 to 345 (LSQL…YPED). N-linked (GlcNAc...) asparagine glycans are attached at residues N327 and N458. A Fe2OG dioxygenase domain is found at 557 to 671 (THLVCRSAIE…RCALALWHTW (115 aa)). Positions 580, 582, and 652 each coordinate Fe cation. R662 is an active-site residue. Residues 674-703 (EHSEQEWTEAKELLQEEEEEEEEEDILSRD) are a coiled coil. Residues 676 to 687 (SEQEWTEAKELL) show a composition bias toward basic and acidic residues. Residues 676 to 732 (SEQEWTEAKELLQEEEEEEEEEDILSRDPSPEPPSHKLQRVQEKAGKPRRVRVREEL) are disordered. Acidic residues predominate over residues 688 to 698 (QEEEEEEEEED). Residues 722 to 732 (KPRRVRVREEL) are compositionally biased toward basic residues. A Prevents secretion from ER motif is present at residues 729–732 (REEL).

Belongs to the leprecan family. Identified in a complex with PLOD1 and P3H4. It depends on Fe cation as a cofactor. The cofactor is L-ascorbate. As to expression, detected in kidney (at protein level).

It localises to the endoplasmic reticulum. It catalyses the reaction L-prolyl-[collagen] + 2-oxoglutarate + O2 = trans-3-hydroxy-L-prolyl-[collagen] + succinate + CO2. Functionally, part of a complex composed of PLOD1, P3H3 and P3H4 that catalyzes hydroxylation of lysine residues in collagen alpha chains and is required for normal assembly and cross-linkling of collagen fibrils. Required for normal hydroxylation of lysine residues in type I collagen chains in skin, bone, tendon, aorta and cornea. Required for normal skin stability via its role in hydroxylation of lysine residues in collagen alpha chains and in collagen fibril assembly. Apparently not required for normal prolyl 3-hydroxylation on collagen chains, possibly because it functions redundantly with other prolyl 3-hydroxylases. The chain is Prolyl 3-hydroxylase 3 from Mus musculus (Mouse).